The following is a 434-amino-acid chain: Eukaryotic translation initiation factor 3 subunit E (434 aa).

A PCI domain is found at 219–392 (FFNHPKGRDL…GHVVMGTQPL (174 aa)).

It belongs to the eIF-3 subunit E family. In terms of assembly, component of the eukaryotic translation initiation factor 3 (eIF-3) complex. The eIF-3 complex interacts with pix. Interacts with mxt.

Its subcellular location is the cytoplasm. Functionally, component of the eukaryotic translation initiation factor 3 (eIF-3) complex, which is involved in protein synthesis of a specialized repertoire of mRNAs and, together with other initiation factors, stimulates binding of mRNA and methionyl-tRNAi to the 40S ribosome. The eIF-3 complex specifically targets and initiates translation of a subset of mRNAs involved in cell proliferation. The polypeptide is Eukaryotic translation initiation factor 3 subunit E (eIF3-S6) (Drosophila persimilis (Fruit fly)).